The primary structure comprises 758 residues: CRISPR system single-strand-specific deoxyribonuclease Cas10/Csm1 (subtype III-A) (758 aa).

Positions 1–82 are HD domain; it reads MKKEKIDLFY…TYIADNIASG (82 aa). One can recognise a GGDEF domain in the interval 509–647; sequence KRLAVVRLDV…EKDSISLFSS (139 aa).

It belongs to the CRISPR-associated Cas10/Csm1 family. In terms of assembly, part of the Csm effector complex that includes at least Cas10(1), Csm2(3), Csm3(5), Csm4(1), Csm5(1) and mature crRNA. The Csm complex is elongated and slightly twisted with a maximal length of 215 Angstroms and a diameter of 75-80 Angstroms. It has been modeled to have a central protein filamant of Csm3 subunits along which the dsRNA helix of paired crRNA and target RNA binds. The filament is capped at one end by Cas10 and Csm4 and at the other end by Csm5; ssDNA is thought to bind to the N-terminal HD domain of Cas10. Csm with a precursor crRNA does not include Csm5, while Cas6, the enzyme probably involved in pre-crRNA processing, is found associated with a subset of the Csm complex. A divalent metal cation serves as cofactor.

The enzyme catalyses 6 ATP = cyclic hexaadenylate + 6 diphosphate. With respect to regulation, ssDNase activity is activated by target RNA binding to the Csm-crRNA complex and is inhibited by EDTA. Functionally, CRISPR (clustered regularly interspaced short palindromic repeat) is an adaptive immune system that provides protection against mobile genetic elements (viruses, transposable elements and conjugative plasmids). CRISPR clusters contain spacers, sequences complementary to antecedent mobile elements, and target invading nucleic acids. CRISPR clusters are transcribed and processed into CRISPR RNA (crRNA). The type III-A Csm effector complex binds crRNA and acts as a crRNA-guided RNase, DNase and cyclic oligoadenylate synthase; binding of target RNA cognate to the crRNA is required for all activities. In a heterologous host this Csm effector complex restricts ssRNA phage MS2, suggesting it may target RNA viruses in vivo. Its function is as follows. Csm functions as a non-specific ssDNase. Base-pairing between crRNA and target RNA to form a ternary Csm complex activates a ssDNase activity; target RNA cleavage suppresses the ssDNase, a temporal control that prevents uncontrolled DNA degradation. Viral RNA transcripts probably tether the Csm complex to the viral genome, recruiting Cas10 ssDNA activity which is able to degrade DNA in the transcription bubble, spatially controlling the DNase activity. This subunit has a weak ssDNase activity that is dramatically activated by the ternary Csm effector complex (the crRNA, Cas proteins and a cognate target ssRNA). Target RNA and ssDNA are cleaved simultaneously, although RNase activity (of Csm3) is much faster. RNA cleavage by Csm3 is not required for ssDNase activity as Csm complex with inactive Csm3 still has ssDNase activity; however as the cleaved target RNA products dissociate away ssDNase activity decreases. Self-recognition, with subsequent repression of the ssDNase activity, occurs when the 5' handle of the crRNA bases pairs with the 3' flanking sequence of the target RNA (which would occur if the CRISPR locus were transcribed as an anti-pre-crRNA). This protein has low activity on dsDNA which is not stimulated by the Csm complex. In terms of biological role, this subunit is a single-strand-specific deoxyribonuclease (ssDNase) which digests both linear and circular ssDNA; it has both exo- and endonuclease activity. Functionally, when associated with the ternary Csm effector complex (the crRNA, Cas proteins and a cognate target ssRNA) synthesizes cyclic oligoadenylates (cOA) from ATP, producing cyclic triadenylate (cA3) up to cyclic hexaadenylate (cA6), which is the active cOA. The enzyme is also able to cyclize pppA3 up to pppA6. cOAs are second messengers that induce an antiviral state important for defense against invading nucleic acids. Synthesis of cOA can occur with AMP plus ATP, 2'dATP or 3'dATP (but no other nucleotides), and requires a free 3'-OH ribose moiety. The chain is CRISPR system single-strand-specific deoxyribonuclease Cas10/Csm1 (subtype III-A) from Streptococcus thermophilus.